Consider the following 172-residue polypeptide: Mitochondrial import inner membrane translocase subunit Tim17-B (172 aa).

Cysteines 9 and 78 form a disulfide. 3 consecutive transmembrane segments (helical) span residues 17–37 (CGGAFTMGVIGGGVFQAIKGF), 61–77 (QIGGSFAVWGGLFSTID), and 113–133 (VGSAMMGGILLALIEGVGILL). Positions 146–172 (PFLEDPSQLPPKDGTPAPGYPSYQQYH) are disordered.

Belongs to the Tim17/Tim22/Tim23 family. As to quaternary structure, component of the TIM23 complex at least composed of TIMM23, TIMM17 (TIMM17A or TIMM17B) and TIMM50. The complex interacts with the TIMM44 component of the PAM complex and with DNAJC15. Post-translationally, forms one disulfide bond. As to expression, expression is abundant in heart and skeletal muscle, intermediate in brain, and weak in pancreas, placenta, kidney and liver.

The protein localises to the mitochondrion inner membrane. In terms of biological role, essential component of the TIM23 complex, a complex that mediates the translocation of transit peptide-containing proteins across the mitochondrial inner membrane. The protein is Mitochondrial import inner membrane translocase subunit Tim17-B (TIMM17B) of Homo sapiens (Human).